Here is a 330-residue protein sequence, read N- to C-terminus: Probable L-lactate dehydrogenase (330 aa).

Residues arginine 105, asparagine 137, and arginine 168 each contribute to the substrate site. Residue asparagine 137 participates in NAD(+) binding. The Proton acceptor role is filled by histidine 192.

This sequence belongs to the LDH/MDH superfamily. LDH family. Homotetramer.

Its subcellular location is the cytoplasm. It catalyses the reaction (S)-lactate + NAD(+) = pyruvate + NADH + H(+). It functions in the pathway fermentation; pyruvate fermentation to lactate; (S)-lactate from pyruvate: step 1/1. The protein is Probable L-lactate dehydrogenase of Schizosaccharomyces pombe (strain 972 / ATCC 24843) (Fission yeast).